The chain runs to 254 residues: Diphthine synthase (254 aa).

Residues leucine 11, aspartate 87, isoleucine 90, 115-116 (SV), leucine 167, leucine 208, and histidine 233 contribute to the S-adenosyl-L-methionine site.

This sequence belongs to the diphthine synthase family. As to quaternary structure, homodimer.

It carries out the reaction 2-[(3S)-amino-3-carboxypropyl]-L-histidyl-[translation elongation factor 2] + 3 S-adenosyl-L-methionine = diphthine-[translation elongation factor 2] + 3 S-adenosyl-L-homocysteine + 3 H(+). Its pathway is protein modification; peptidyl-diphthamide biosynthesis. In terms of biological role, S-adenosyl-L-methionine-dependent methyltransferase that catalyzes the trimethylation of the amino group of the modified target histidine residue in translation elongation factor 2 (EF-2), to form an intermediate called diphthine. The three successive methylation reactions represent the second step of diphthamide biosynthesis. In Metallosphaera sedula (strain ATCC 51363 / DSM 5348 / JCM 9185 / NBRC 15509 / TH2), this protein is Diphthine synthase.